We begin with the raw amino-acid sequence, 272 residues long: 2,3,4,5-tetrahydropyridine-2,6-dicarboxylate N-succinyltransferase (272 aa).

Arg104 and Asp141 together coordinate substrate.

Belongs to the transferase hexapeptide repeat family. As to quaternary structure, homotrimer.

It localises to the cytoplasm. It catalyses the reaction (S)-2,3,4,5-tetrahydrodipicolinate + succinyl-CoA + H2O = (S)-2-succinylamino-6-oxoheptanedioate + CoA. It functions in the pathway amino-acid biosynthesis; L-lysine biosynthesis via DAP pathway; LL-2,6-diaminopimelate from (S)-tetrahydrodipicolinate (succinylase route): step 1/3. The polypeptide is 2,3,4,5-tetrahydropyridine-2,6-dicarboxylate N-succinyltransferase (Alkalilimnicola ehrlichii (strain ATCC BAA-1101 / DSM 17681 / MLHE-1)).